We begin with the raw amino-acid sequence, 481 residues long: UDP-glycosyltransferase 88F3 (481 aa).

UDP-alpha-D-glucose contacts are provided by residues Ser-288, 357–358 (WA), 375–383 (HCGWNSVLE), and 397–400 (YAEQ).

It belongs to the UDP-glycosyltransferase family.

Its function is as follows. Glycosyltransferase that may possess chalcone and dihydrochalcone 2'-O-glucosyltransferase activity. In Pyrus communis (Pear), this protein is UDP-glycosyltransferase 88F3.